A 762-amino-acid polypeptide reads, in one-letter code: cGMP-dependent protein kinase 2 (762 aa).

The segment at 1–25 is disordered; it reads MGNGSVKPKHSKHPDGHSGNLTTDA. A lipid anchor (N-myristoyl glycine) is attached at Gly2. The stretch at 23–85 forms a coiled coil; that stretch reads TDALRNKVTE…CIQLNKLQDV (63 aa). Residues Ser110 and Ser117 each carry the phosphoserine modification. The interval 117 to 138 is disordered; it reads SRRGAKAGVSAEPTTRTYDLNK. The segment at 168–283 is cGMP-binding, high affinity; cAMP-binding, moderate affinity; that stretch reads FLKRLDPQQI…DEQYRNFLRS (116 aa). Residues 232 to 235 and 242 to 243 contribute to the 3',5'-cyclic AMP site; these read GELA and RT. 3',5'-cyclic GMP contacts are provided by residues 232–235, 242–243, Lys347, 356–359, 366–367, Asp412, and Arg415; these read GELA, RT, GEKA, and RS. The cGMP-binding, high affinity; cAMP-binding, low affinity stretch occupies residues 286–416; sequence LLKNLPEDKL…NLNRDDEKRH (131 aa). Ser431 bears the Phosphoserine mark. Positions 453-711 constitute a Protein kinase domain; it reads LEIIATLGVG…INDIKKHRWL (259 aa). ATP contacts are provided by residues 459–467 and Lys482; that span reads LGVGGFGRV. The active-site Proton acceptor is the Asp576. At Thr609 the chain carries Phosphothreonine. The region spanning 712–762 is the AGC-kinase C-terminal domain; the sequence is NGFNWEGLKARSLPSPLQRELKGPIDHSYFDKYPPEKGMPPDELSGWDKDF. A disordered region spans residues 740-762; that stretch reads YFDKYPPEKGMPPDELSGWDKDF.

Belongs to the protein kinase superfamily. AGC Ser/Thr protein kinase family. cGMP subfamily. Interacts with GRIA1/GLUR1. Myristoylation mediates membrane localization. As to expression, highly concentrated in brain, lung and intestinal mucosa.

It localises to the apical cell membrane. The enzyme catalyses L-seryl-[protein] + ATP = O-phospho-L-seryl-[protein] + ADP + H(+). The catalysed reaction is L-threonyl-[protein] + ATP = O-phospho-L-threonyl-[protein] + ADP + H(+). Binding of cGMP results in enzyme activation. In terms of biological role, crucial regulator of intestinal secretion and bone growth. Phosphorylates and activates CFTR on the plasma membrane. Plays a key role in intestinal secretion by regulating cGMP-dependent translocation of CFTR in jejunum. Acts downstream of NMDAR to activate the plasma membrane accumulation of GRIA1/GLUR1 in synapse and increase synaptic plasticity. Phosphorylates GRIA1/GLUR1 at Ser-863. Acts as a regulator of gene expression and activator of the extracellular signal-regulated kinases MAPK3/ERK1 and MAPK1/ERK2 in mechanically stimulated osteoblasts. Under fluid shear stress, mediates ERK activation and subsequent induction of FOS, FOSL1/FRA1, FOSL2/FRA2 and FOSB that play a key role in the osteoblast anabolic response to mechanical stimulation. The chain is cGMP-dependent protein kinase 2 (PRKG2) from Homo sapiens (Human).